A 451-amino-acid polypeptide reads, in one-letter code: Tubulin alpha-3 chain (451 aa).

Residue Q11 coordinates GTP. K40 carries the N6-acetyllysine modification. E71, G144, T145, T179, N206, and N228 together coordinate GTP. A Mg(2+)-binding site is contributed by E71. E254 is an active-site residue.

This sequence belongs to the tubulin family. As to quaternary structure, dimer of alpha and beta chains. A typical microtubule is a hollow water-filled tube with an outer diameter of 25 nm and an inner diameter of 15 nM. Alpha-beta heterodimers associate head-to-tail to form protofilaments running lengthwise along the microtubule wall with the beta-tubulin subunit facing the microtubule plus end conferring a structural polarity. Microtubules usually have 13 protofilaments but different protofilament numbers can be found in some organisms and specialized cells. The cofactor is Mg(2+). Post-translationally, undergoes a tyrosination/detyrosination cycle, the cyclic removal and re-addition of a C-terminal tyrosine residue by the enzymes tubulin tyrosine carboxypeptidase (TTCP) and tubulin tyrosine ligase (TTL), respectively. Acetylation of alpha chains at Lys-40 stabilizes microtubules and affects affinity and processivity of microtubule motors. This modification has a role in multiple cellular functions, ranging from cell motility, cell cycle progression or cell differentiation to intracellular trafficking and signaling.

The protein resides in the cytoplasm. It is found in the cytoskeleton. It carries out the reaction GTP + H2O = GDP + phosphate + H(+). Functionally, tubulin is the major constituent of microtubules, a cylinder consisting of laterally associated linear protofilaments composed of alpha- and beta-tubulin heterodimers. Microtubules grow by the addition of GTP-tubulin dimers to the microtubule end, where a stabilizing cap forms. Below the cap, tubulin dimers are in GDP-bound state, owing to GTPase activity of alpha-tubulin. This Hordeum vulgare (Barley) protein is Tubulin alpha-3 chain (TUBA3).